The following is a 106-amino-acid chain: Large ribosomal subunit protein bL21c (106 aa).

This sequence belongs to the bacterial ribosomal protein bL21 family. As to quaternary structure, part of the 50S ribosomal subunit.

The protein localises to the plastid. Its subcellular location is the chloroplast. In terms of biological role, this protein binds to 23S rRNA. The sequence is that of Large ribosomal subunit protein bL21c from Gracilaria tenuistipitata var. liui (Red alga).